A 196-amino-acid polypeptide reads, in one-letter code: Small ribosomal subunit protein uS4c (196 aa).

The segment at 16–36 (GALPGLTRKTPKSGSNLKKKF) is disordered. Residues 89 to 169 (MRLDNILFRL…LPKHLTIDTL (81 aa)) enclose the S4 RNA-binding domain.

It belongs to the universal ribosomal protein uS4 family. As to quaternary structure, part of the 30S ribosomal subunit. Contacts protein S5. The interaction surface between S4 and S5 is involved in control of translational fidelity.

It is found in the plastid. It localises to the chloroplast. Functionally, one of the primary rRNA binding proteins, it binds directly to 16S rRNA where it nucleates assembly of the body of the 30S subunit. In terms of biological role, with S5 and S12 plays an important role in translational accuracy. The polypeptide is Small ribosomal subunit protein uS4c (rps4) (Cinna latifolia (Drooping woodreed)).